We begin with the raw amino-acid sequence, 315 residues long: MFQEIDIKSLKGKSKVARLRIKPDVNRTVIRKPKWIRTKHIFGSKVDQLKSTLRAQKLFTVCEEAQCPNLVECFNHGTATFMIMGQICTRRCPFCDVAHGKPRTLDIDEPKHLADTIKKMRLKYVVITSVDRDDLHDGGVQHFKMCIDNIRLSTPKVKIEILTPDFKGRIDKALKVFKSCPPDVFNHNLETVPSLYPKVRPGANYEYSLKLLQKFKQQHPLVISKSGLMLGVGESEKQVINVLKDLRRHNVDMLTIGQYLQPSKYHLAVETYIHPNQFDKYRKIALKLGFIRVASGPMVRSSYHANLQIKGKLII.

Positions 62, 67, 73, 88, 92, 95, and 302 each coordinate [4Fe-4S] cluster. Positions 74–292 constitute a Radical SAM core domain; it reads FNHGTATFMI…KIALKLGFIR (219 aa).

It belongs to the radical SAM superfamily. Lipoyl synthase family. [4Fe-4S] cluster is required as a cofactor.

The protein resides in the cytoplasm. It catalyses the reaction [[Fe-S] cluster scaffold protein carrying a second [4Fe-4S](2+) cluster] + N(6)-octanoyl-L-lysyl-[protein] + 2 oxidized [2Fe-2S]-[ferredoxin] + 2 S-adenosyl-L-methionine + 4 H(+) = [[Fe-S] cluster scaffold protein] + N(6)-[(R)-dihydrolipoyl]-L-lysyl-[protein] + 4 Fe(3+) + 2 hydrogen sulfide + 2 5'-deoxyadenosine + 2 L-methionine + 2 reduced [2Fe-2S]-[ferredoxin]. It participates in protein modification; protein lipoylation via endogenous pathway; protein N(6)-(lipoyl)lysine from octanoyl-[acyl-carrier-protein]: step 2/2. Its function is as follows. Catalyzes the radical-mediated insertion of two sulfur atoms into the C-6 and C-8 positions of the octanoyl moiety bound to the lipoyl domains of lipoate-dependent enzymes, thereby converting the octanoylated domains into lipoylated derivatives. This is Lipoyl synthase from Vesicomyosocius okutanii subsp. Calyptogena okutanii (strain HA).